A 497-amino-acid chain; its full sequence is Vacuolar fusion protein CCZ1 homolog B (497 aa).

Residues 244-284 are disordered; sequence GTSSWSYLRKGSGSPQISSRSTTVPPLGSGGTLPSGNGSST.

This sequence belongs to the CCZ1 family. In terms of assembly, interacts with MON1.

The protein resides in the endosome. The protein localises to the prevacuolar compartment. Functionally, plays an important role in membrane trafficking through the secretory apparatus. In complex with MON1, acts as a guanine exchange factor (GEF) for RABG3F of the RAB7 protein family. Promotes the exchange of GDP to GTP, converting RABG3F from an inactive GDP-bound form into an active GTP-bound form. The RABG3F active form is involved in protein trafficking from prevacuolar compartments (PVCs) to vacuoles. May serve as a linker between Rab5 and Rab7 protein families in PVCs and mediate PVC maturation. The polypeptide is Vacuolar fusion protein CCZ1 homolog B (Arabidopsis thaliana (Mouse-ear cress)).